The following is a 289-amino-acid chain: 4-diphosphocytidyl-2-C-methyl-D-erythritol kinase (289 aa).

Residue Lys-11 is part of the active site. 96–106 (PVAAGIGGGSS) contacts ATP. Asp-138 is an active-site residue.

This sequence belongs to the GHMP kinase family. IspE subfamily.

The catalysed reaction is 4-CDP-2-C-methyl-D-erythritol + ATP = 4-CDP-2-C-methyl-D-erythritol 2-phosphate + ADP + H(+). The protein operates within isoprenoid biosynthesis; isopentenyl diphosphate biosynthesis via DXP pathway; isopentenyl diphosphate from 1-deoxy-D-xylulose 5-phosphate: step 3/6. Functionally, catalyzes the phosphorylation of the position 2 hydroxy group of 4-diphosphocytidyl-2C-methyl-D-erythritol. This Azorhizobium caulinodans (strain ATCC 43989 / DSM 5975 / JCM 20966 / LMG 6465 / NBRC 14845 / NCIMB 13405 / ORS 571) protein is 4-diphosphocytidyl-2-C-methyl-D-erythritol kinase.